The chain runs to 170 residues: Small ribosomal subunit protein mS41 (170 aa).

Residues methionine 1 to serine 20 constitute a mitochondrion transit peptide.

It belongs to the mitochondrion-specific ribosomal protein mS41 family. Component of the mitochondrial small ribosomal subunit (mt-SSU).

It localises to the mitochondrion. Its function is as follows. Component of the mitochondrial ribosome (mitoribosome), a dedicated translation machinery responsible for the synthesis of mitochondrial genome-encoded proteins, including at least some of the essential transmembrane subunits of the mitochondrial respiratory chain. The mitoribosomes are attached to the mitochondrial inner membrane and translation products are cotranslationally integrated into the membrane. mS41 is involved in telomere length regulation. This Candida albicans (strain SC5314 / ATCC MYA-2876) (Yeast) protein is Small ribosomal subunit protein mS41 (FYV4).